We begin with the raw amino-acid sequence, 315 residues long: MTAQTAPAFPHRHLLGIEGLSRPDIEALLERADAAVALSRQVEKKRTVLRGRTQINLFFEPSTRTQSSFELAGKRLGADVMNMSVASSSVKKGETLIDTAATLNAMRPDIIVVRHHAAGAVHLLARKVDCAVVNAGDGAHEHPTQALLDALTIRRNKGGIEGLQVAICGDVLHSRVARSNIILLQALGARVRVIGPSTLLPTGIERFGVEVFTDMRAGLKGCDIVMMLRLQRERMNGSFVPSVKEYFRYYGLDGDKLALAKPGALVMHPGPMNRGVEIASDIADGTQSLIREQVEMGVAVRMAVLEALATHLPNG.

2 residues coordinate carbamoyl phosphate: R64 and T65. K92 provides a ligand contact to L-aspartate. Residues R114, H142, and Q145 each contribute to the carbamoyl phosphate site. L-aspartate contacts are provided by R175 and R229. G270 and P271 together coordinate carbamoyl phosphate.

This sequence belongs to the aspartate/ornithine carbamoyltransferase superfamily. ATCase family. Heterododecamer (2C3:3R2) of six catalytic PyrB chains organized as two trimers (C3), and six regulatory PyrI chains organized as three dimers (R2).

It carries out the reaction carbamoyl phosphate + L-aspartate = N-carbamoyl-L-aspartate + phosphate + H(+). It participates in pyrimidine metabolism; UMP biosynthesis via de novo pathway; (S)-dihydroorotate from bicarbonate: step 2/3. In terms of biological role, catalyzes the condensation of carbamoyl phosphate and aspartate to form carbamoyl aspartate and inorganic phosphate, the committed step in the de novo pyrimidine nucleotide biosynthesis pathway. This chain is Aspartate carbamoyltransferase catalytic subunit, found in Methylorubrum extorquens (strain CM4 / NCIMB 13688) (Methylobacterium extorquens).